We begin with the raw amino-acid sequence, 362 residues long: Serine/threonine-protein phosphatase 2A activator 1 (362 aa).

The span at 1–10 (MQPHTQPPQP) shows a compositional bias: pro residues. Disordered stretches follow at residues 1-28 (MQPH…APPR) and 339-362 (NVEE…PWAR). The segment covering 340–351 (VEERGDKNEGKG) has biased composition (basic and acidic residues).

This sequence belongs to the PTPA-type PPIase family.

It localises to the cytoplasm. Its subcellular location is the nucleus. It catalyses the reaction [protein]-peptidylproline (omega=180) = [protein]-peptidylproline (omega=0). PPIases accelerate the folding of proteins. It catalyzes the cis-trans isomerization of proline imidic peptide bonds in oligopeptides. Acts as a regulatory subunit for PP2A-like phosphatases modulating their activity or substrate specificity, probably by inducing a conformational change in the catalytic subunit, a direct target of the PPIase. Can reactivate inactive phosphatase PP2A-phosphatase methylesterase complexes (PP2Ai) in presence of ATP and Mg(2+) by dissociating the inactive form from the complex. The sequence is that of Serine/threonine-protein phosphatase 2A activator 1 (RRD1) from Cryptococcus neoformans var. neoformans serotype D (strain B-3501A) (Filobasidiella neoformans).